The sequence spans 174 residues: Alpha-crystallin B chain (174 aa).

N-acetylmethionine is present on methionine 1. Residues 55–163 (RMPSWLETGL…PERSIPITRE (109 aa)) form the sHSP domain. Zn(2+)-binding residues include histidine 82, histidine 103, glutamate 105, and histidine 110. The interval 148 to 174 (RKQSDVPERSIPITREEKPAIAGAQRK) is disordered. The span at 149-166 (KQSDVPERSIPITREEKP) shows a compositional bias: basic and acidic residues.

This sequence belongs to the small heat shock protein (HSP20) family. In terms of assembly, heteromer composed of three CRYAA and one CRYAB subunits. Aggregates with homologous proteins, including the small heat shock protein HSPB1, to form large heteromeric complexes. Inter-subunit bridging via zinc ions enhances stability, which is crucial as there is no protein turn over in the lens. In terms of tissue distribution, lens as well as other tissues.

May contribute to the transparency and refractive index of the lens. The polypeptide is Alpha-crystallin B chain (CRYAB) (Anas platyrhynchos (Mallard)).